Consider the following 101-residue polypeptide: MISIIIAYATPEKQVEIPLTVEESCTLVVAVKRSGILQQFPEINLSQAIVGIHNKRTALDAGLRDGDRIEIYRPLTMDPKQARLLRAKRGKIRRMVRGEAG.

This sequence belongs to the UPF0125 (RnfH) family.

In Coxiella burnetii (strain CbuG_Q212) (Coxiella burnetii (strain Q212)), this protein is Protein RnfH.